The following is a 542-amino-acid chain: Apolipoprotein N-acyltransferase (542 aa).

6 helical membrane passes run 26–46 (ASVICCMCGYGLLWRGLLSLV), 54–74 (IWCLAFFWTWSVEGFHFSWML), 89–109 (LLISYLAVTFASFSCLVVLCF), 113–133 (YWGALFWLPGVWVAIESVRYY), 163–183 (WAGQSFVVIATNLGCCSVLVF), and 187–207 (FSYGLWLVCCAFPYFLGGTYY). Residues 220–499 (LRVAIVQPGY…PDVLQVSVPV (280 aa)) form the CN hydrolase domain. The active-site Proton acceptor is E264. The active site involves K349. C404 serves as the catalytic Nucleophile. Residues 509–529 (FGDAPLLFVAVSSVLGVVGYF) form a helical membrane-spanning segment.

This sequence belongs to the CN hydrolase family. Apolipoprotein N-acyltransferase subfamily.

It localises to the cell inner membrane. It catalyses the reaction N-terminal S-1,2-diacyl-sn-glyceryl-L-cysteinyl-[lipoprotein] + a glycerophospholipid = N-acyl-S-1,2-diacyl-sn-glyceryl-L-cysteinyl-[lipoprotein] + a 2-acyl-sn-glycero-3-phospholipid + H(+). It participates in protein modification; lipoprotein biosynthesis (N-acyl transfer). In terms of biological role, catalyzes the phospholipid dependent N-acylation of the N-terminal cysteine of apolipoprotein, the last step in lipoprotein maturation. The polypeptide is Apolipoprotein N-acyltransferase (Chlamydia muridarum (strain MoPn / Nigg)).